The primary structure comprises 437 residues: Gamma-glutamyl phosphate reductase (437 aa).

The protein belongs to the gamma-glutamyl phosphate reductase family.

Its subcellular location is the cytoplasm. It catalyses the reaction L-glutamate 5-semialdehyde + phosphate + NADP(+) = L-glutamyl 5-phosphate + NADPH + H(+). The protein operates within amino-acid biosynthesis; L-proline biosynthesis; L-glutamate 5-semialdehyde from L-glutamate: step 2/2. Its function is as follows. Catalyzes the NADPH-dependent reduction of L-glutamate 5-phosphate into L-glutamate 5-semialdehyde and phosphate. The product spontaneously undergoes cyclization to form 1-pyrroline-5-carboxylate. The chain is Gamma-glutamyl phosphate reductase from Synechococcus sp. (strain CC9902).